Consider the following 382-residue polypeptide: Homoserine O-succinyltransferase (382 aa).

The AB hydrolase-1 domain occupies 51-359 (NAVLICHALS…DAPWGHDAFL (309 aa)). Ser-157 (nucleophile) is an active-site residue. Arg-227 serves as a coordination point for substrate. Active-site residues include Asp-322 and His-355. Asp-356 serves as a coordination point for substrate.

It belongs to the AB hydrolase superfamily. MetX family. As to quaternary structure, homodimer.

It localises to the cytoplasm. The enzyme catalyses L-homoserine + succinyl-CoA = O-succinyl-L-homoserine + CoA. It functions in the pathway amino-acid biosynthesis; L-methionine biosynthesis via de novo pathway; O-succinyl-L-homoserine from L-homoserine: step 1/1. Functionally, transfers a succinyl group from succinyl-CoA to L-homoserine, forming succinyl-L-homoserine. This Marinobacter nauticus (strain ATCC 700491 / DSM 11845 / VT8) (Marinobacter aquaeolei) protein is Homoserine O-succinyltransferase.